A 756-amino-acid chain; its full sequence is Virulence factor MDV010 (756 aa).

Residues 1-30 (MPSKSIADHHAGYGVALAIVALLLIHGTAL) form the signal peptide. The interval 96–120 (EEHITLSSPRTSTKTTNENGHEKDS) is disordered. Over residues 100–113 (TLSSPRTSTKTTNE) the composition is skewed to polar residues. N-linked (GlcNAc...) asparagine; by host glycans are attached at residues Asn-222, Asn-241, Asn-287, Asn-423, Asn-495, Asn-542, Asn-552, Asn-580, Asn-660, Asn-684, Asn-715, and Asn-744.

Its subcellular location is the secreted. Its function is as follows. May play a role in host immune modulation since the protein is secreted and provides an advantage for growth in vivo while it is completely dispensable in cell culture. This Gallid herpesvirus 2 (strain Chicken/Md5/ATCC VR-987) (GaHV-2) protein is Virulence factor MDV010 (MDV010).